The primary structure comprises 904 residues: DNA mismatch repair protein MutS (904 aa).

G654–S661 provides a ligand contact to ATP.

It belongs to the DNA mismatch repair MutS family.

This protein is involved in the repair of mismatches in DNA. It is possible that it carries out the mismatch recognition step. This protein has a weak ATPase activity. The sequence is that of DNA mismatch repair protein MutS from Caulobacter sp. (strain K31).